The chain runs to 75 residues: UPF0512 protein D (75 aa).

The interval 1–20 is disordered; it reads MAIFKSISSISNSTGSMGSS.

Belongs to the UPF0512 family.

This chain is UPF0512 protein D, found in Dictyostelium discoideum (Social amoeba).